A 391-amino-acid chain; its full sequence is Aspartic protease 17 (391 aa).

A signal peptide spans 1–15 (MHLIFLLFLAPFCSA). Residues 65–385 (YLGNFTVGTP…DIGNARIGFA (321 aa)) form the Peptidase A1 domain. N68 carries N-linked (GlcNAc...) asparagine glycosylation. D83 is a catalytic residue. N108 is a glycosylation site (N-linked (GlcNAc...) asparagine). D274 is an active-site residue. Residues C309 and C345 are joined by a disulfide bond.

It belongs to the peptidase A1 family. In terms of tissue distribution, expressed in intestinal cells.

It is found in the secreted. Its function is as follows. Aspartic proteinase. This Caenorhabditis elegans protein is Aspartic protease 17.